The following is a 427-amino-acid chain: MSSVVVVGAQWGDEGKGKITDFLAQKADLVARYQGGNNAGHTVVVKGKEFKLHLIPSGILYPDKTCIIGNGVVIDPGVLIEELKYLESEGISADNLRISGRAHVIMPYHRRLDEVEEERRGANKIGTTKRGIGPCYVDKIARVGIRMADLLDPEEFRARLEQNVAAKNELLEKIYGVDGFDAQAIFDEYRAYAERLQAYITDTSVLLDDARKEGKNILFEGAQGTLLDIDHGTYPFVTSSHPIGGGATVGAGIGPTTINKILGVVKAYTTRVGEGPFPTELNDEMGDLIRKAGHEFGTTTGRPRRCGWFDAVIMRYSVRVSGLTCMAVTKLDVLDQLPVIKICVGYRYQDEVITHFPESLKKLAQCEPVYEEMPGWMSDTTGCRTMEELPEKARRYVKRLEELCGCPALLLAVGPDREQTIELGEAF.

GTP is bound by residues 12–18 (GDEGKGK) and 40–42 (GHT). The active-site Proton acceptor is Asp13. Positions 13 and 40 each coordinate Mg(2+). Residues 13-16 (DEGK), 38-41 (NAGH), Thr128, Arg142, Gln223, Thr238, and Arg302 contribute to the IMP site. His41 serves as the catalytic Proton donor. A substrate-binding site is contributed by 298-304 (TTTGRPR). Residues Arg304, 330-332 (KLD), and 412-414 (AVG) contribute to the GTP site.

This sequence belongs to the adenylosuccinate synthetase family. As to quaternary structure, homodimer. Mg(2+) serves as cofactor.

The protein resides in the cytoplasm. It catalyses the reaction IMP + L-aspartate + GTP = N(6)-(1,2-dicarboxyethyl)-AMP + GDP + phosphate + 2 H(+). Its pathway is purine metabolism; AMP biosynthesis via de novo pathway; AMP from IMP: step 1/2. Functionally, plays an important role in the de novo pathway of purine nucleotide biosynthesis. Catalyzes the first committed step in the biosynthesis of AMP from IMP. This chain is Adenylosuccinate synthetase, found in Heliobacterium modesticaldum (strain ATCC 51547 / Ice1).